We begin with the raw amino-acid sequence, 422 residues long: Histidine--tRNA ligase (422 aa).

Belongs to the class-II aminoacyl-tRNA synthetase family. Homodimer.

It localises to the cytoplasm. The enzyme catalyses tRNA(His) + L-histidine + ATP = L-histidyl-tRNA(His) + AMP + diphosphate + H(+). The sequence is that of Histidine--tRNA ligase from Onion yellows phytoplasma (strain OY-M).